Consider the following 349-residue polypeptide: Protein RecA (349 aa).

Residue 67–74 (GPESSGKT) coordinates ATP.

It belongs to the RecA family.

The protein resides in the cytoplasm. Its function is as follows. Can catalyze the hydrolysis of ATP in the presence of single-stranded DNA, the ATP-dependent uptake of single-stranded DNA by duplex DNA, and the ATP-dependent hybridization of homologous single-stranded DNAs. It interacts with LexA causing its activation and leading to its autocatalytic cleavage. The sequence is that of Protein RecA from Chlamydia abortus (strain DSM 27085 / S26/3) (Chlamydophila abortus).